The primary structure comprises 195 residues: Thioredoxin reductase-like selenoprotein T (195 aa).

Residues 1–19 (MRLLLLLLVAASAMVRSEA) form the signal peptide. A cross-link (cysteinyl-selenocysteine (Cys-Sec)) is located at residues 46-49 (CVSU). Position 49 (Sec-49) is a non-standard amino acid, selenocysteine. A helical transmembrane segment spans residues 85 to 103 (IASFLSVFKLVLIGLIIVG).

Belongs to the SelWTH family. Selenoprotein T subfamily. May contain a selenide-sulfide bond between Cys-46 and Sec-49. This bond is speculated to serve as redox-active pair. As to expression, ubiquitous. Highly expressed in the endocrine pancreas.

Its subcellular location is the endoplasmic reticulum membrane. The enzyme catalyses [thioredoxin]-dithiol + NADP(+) = [thioredoxin]-disulfide + NADPH + H(+). Functionally, selenoprotein with thioredoxin reductase-like oxidoreductase activity. Protects dopaminergic neurons against oxidative stress and cell death. Involved in ADCYAP1/PACAP-induced calcium mobilization and neuroendocrine secretion. Plays a role in fibroblast anchorage and redox regulation. In gastric smooth muscle, modulates the contraction processes through the regulation of calcium release and MYLK activation. In pancreatic islets, involved in the control of glucose homeostasis, contributes to prolonged ADCYAP1/PACAP-induced insulin secretion. This chain is Thioredoxin reductase-like selenoprotein T, found in Homo sapiens (Human).